The following is a 332-amino-acid chain: tRNA dimethylallyltransferase (332 aa).

Residue 14-21 participates in ATP binding; sequence GPTASGKT. 16-21 is a binding site for substrate; the sequence is TASGKT. The segment at 39–42 is interaction with substrate tRNA; the sequence is DSMQ. The interval 312–332 is disordered; sequence NKRSSNHDCKRKHPRPSTREL. Positions 320–332 are enriched in basic residues; it reads CKRKHPRPSTREL.

This sequence belongs to the IPP transferase family. Monomer. Mg(2+) is required as a cofactor.

The enzyme catalyses adenosine(37) in tRNA + dimethylallyl diphosphate = N(6)-dimethylallyladenosine(37) in tRNA + diphosphate. Its function is as follows. Catalyzes the transfer of a dimethylallyl group onto the adenine at position 37 in tRNAs that read codons beginning with uridine, leading to the formation of N6-(dimethylallyl)adenosine (i(6)A). In Staphylococcus epidermidis (strain ATCC 35984 / DSM 28319 / BCRC 17069 / CCUG 31568 / BM 3577 / RP62A), this protein is tRNA dimethylallyltransferase.